Here is a 514-residue protein sequence, read N- to C-terminus: Protein farnesyltransferase subunit beta (514 aa).

Over residues 1-13 (MRHHTKNLRRRAI) the composition is skewed to basic residues. The disordered stretch occupies residues 1-56 (MRHHTKNLRRRAIFLRTTPRGNMDSSSSVATSTSSSSNHRLVRSSEGSPSAGGDDI). Low complexity predominate over residues 25-39 (SSSSVATSTSSSSNH). PFTB repeat units lie at residues 180 to 221 (AESL…AVVG), 231 to 272 (RRAL…SLLN), 293 to 334 (FTGL…SLLG), 346 to 388 (IERL…PLIE), and 410 to 454 (REGL…SSAQ). Residues 319 to 322 (HGAY) and 367 to 370 (RTNK) contribute to the (2E,6E)-farnesyl diphosphate site. 2 residues coordinate Zn(2+): Asp-373 and Cys-375. 376 to 379 (YSHW) is a binding site for (2E,6E)-farnesyl diphosphate. His-442 lines the Zn(2+) pocket.

Belongs to the protein prenyltransferase subunit beta family. In terms of assembly, heterodimer of an alpha and a beta subunit. Interacts with RAS1 and RAS2. The cofactor is Zn(2+). As to expression, highly expressed in mycelium, conidium, conidial germination, early formed appressorium and the late infection hypha.

The protein resides in the cytoplasm. The catalysed reaction is L-cysteinyl-[protein] + (2E,6E)-farnesyl diphosphate = S-(2E,6E)-farnesyl-L-cysteinyl-[protein] + diphosphate. Functionally, catalyzes the transfer of a farnesyl moiety from farnesyl diphosphate to a cysteine at the fourth position from the C-terminus of several proteins having the C-terminal sequence Cys-aliphatic-aliphatic-X. The beta subunit is responsible for peptide-binding. The protein is Protein farnesyltransferase subunit beta (RAM1) of Pyricularia oryzae (strain 70-15 / ATCC MYA-4617 / FGSC 8958) (Rice blast fungus).